The chain runs to 395 residues: Synaptotagmin-8 (395 aa).

The Extracellular segment spans residues 1–44; the sequence is MQADRSMKMGHALNPFSTSAPLDATAGPSLIPDLITRIPWPRWT. Residues 45 to 65 traverse the membrane as a helical; Signal-anchor for type III membrane protein segment; it reads LFIAILAAGVLLVSCLLCVIC. The Cytoplasmic portion of the chain corresponds to 66-395; the sequence is CYCHRHRHRK…PRLPLLRPRS (330 aa). C2 domains follow at residues 113 to 229 and 241 to 370; these read QWGR…ESWY and QMGE…AQWH.

This sequence belongs to the synaptotagmin family. Homodimer or homooligomer. Homodimerization and homooligomerization do not depend on Ca(2+). Interacts with SYNCRIP isoform 2 C-terminus. Binds inositol 1,3,4,5-tetrakisphosphate (IP4). Binds to AP2 in a Ca(2+)-independent manner. Interacts with STX1A, STX1B and STX2; the interaction is Ca(2+)-dependent. In terms of tissue distribution, ubiquitous. Detected in testis and brain. Expressed in primary neurons, neuroendocrine and endocrine cells.

Its subcellular location is the cytoplasm. The protein localises to the cell membrane. It is found in the cytoplasmic vesicle. It localises to the secretory vesicle. The protein resides in the acrosome. Involved in the trafficking and exocytosis of secretory vesicles in non-neuronal tissues. Mediates Ca(2+)-regulation of exocytosis acrosomal reaction in sperm. May mediate Ca(2+)-regulation of exocytosis in insulin secreted cells. In Mus musculus (Mouse), this protein is Synaptotagmin-8 (Syt8).